Consider the following 294-residue polypeptide: 4-hydroxy-tetrahydrodipicolinate synthase (294 aa).

Position 47 (Thr47) interacts with pyruvate. The active-site Proton donor/acceptor is Tyr135. The active-site Schiff-base intermediate with substrate is Lys163. Thr205 lines the pyruvate pocket.

It belongs to the DapA family. As to quaternary structure, homotetramer; dimer of dimers.

The protein localises to the cytoplasm. The enzyme catalyses L-aspartate 4-semialdehyde + pyruvate = (2S,4S)-4-hydroxy-2,3,4,5-tetrahydrodipicolinate + H2O + H(+). It participates in amino-acid biosynthesis; L-lysine biosynthesis via DAP pathway; (S)-tetrahydrodipicolinate from L-aspartate: step 3/4. In terms of biological role, catalyzes the condensation of (S)-aspartate-beta-semialdehyde [(S)-ASA] and pyruvate to 4-hydroxy-tetrahydrodipicolinate (HTPA). The polypeptide is 4-hydroxy-tetrahydrodipicolinate synthase (Rickettsia felis (strain ATCC VR-1525 / URRWXCal2) (Rickettsia azadi)).